A 155-amino-acid chain; its full sequence is Protein SprT-like (155 aa).

A SprT-like domain is found at 6-148 (LQRLVERVSL…VCGQCGGKLM (143 aa)). Zn(2+) is bound at residue His67. The active site involves Glu68. Residue His71 coordinates Zn(2+).

The protein belongs to the SprT family. It depends on Zn(2+) as a cofactor.

It is found in the cytoplasm. This is Protein SprT-like from Geobacillus sp. (strain WCH70).